We begin with the raw amino-acid sequence, 61 residues long: Metallothionein-2E (61 aa).

Position 1 is an N-acetylmethionine (M1). The beta stretch occupies residues 1–29 (MDPNCSCATRDSCACASSCKCKECKCTSC). 20 residues coordinate a divalent metal cation: C5, C7, C13, C15, C19, C21, C24, C26, C29, C33, C34, C36, C37, C41, C44, C48, C50, C57, C59, and C60. Positions 30–61 (KKSCCSCCPAGCTKCAQGCICKGALDKCSCCA) are alpha.

This sequence belongs to the metallothionein superfamily. Type 1 family. In terms of assembly, monomer.

Functionally, metallothioneins have a high content of cysteine residues that bind various heavy metals; these proteins are transcriptionally regulated by both heavy metals and glucocorticoids. The protein is Metallothionein-2E of Oryctolagus cuniculus (Rabbit).